The sequence spans 277 residues: MAFKHFNPTTPGQRQLVIVDRSCLYKGKSVKALTAGLSSKGGRNNHGRVTARFQGGGHKRSYRFVDFKRLKRGVFAKVERLEYDPNRTAFIALIRYEDGQLSYILAPQRLDVGDSIIAGSNVDVKPGNAMPLGNMPVGTIIHNVEMKPGKGGQIARSAGTYAQLVGRGQGMVILRLNSGEQRLVSGSCFATVGAVSNPDHANINDGKAGRSRWRGKRPHVRGVAMNPVDHPHGGGEGRTSGGRHPVSPWGKSTKGKRTRSNKATDKFIMHTRHQRKK.

The segment at 222–277 is disordered; sequence GVAMNPVDHPHGGGEGRTSGGRHPVSPWGKSTKGKRTRSNKATDKFIMHTRHQRKK.

It belongs to the universal ribosomal protein uL2 family. In terms of assembly, part of the 50S ribosomal subunit. Forms a bridge to the 30S subunit in the 70S ribosome.

One of the primary rRNA binding proteins. Required for association of the 30S and 50S subunits to form the 70S ribosome, for tRNA binding and peptide bond formation. It has been suggested to have peptidyltransferase activity; this is somewhat controversial. Makes several contacts with the 16S rRNA in the 70S ribosome. The chain is Large ribosomal subunit protein uL2 from Bartonella quintana (strain Toulouse) (Rochalimaea quintana).